The chain runs to 514 residues: MTDKLIIFDTTLRDGEQSPGASMTKEEKIRIAKHLERMKVDVIEAGFAASSNGDFDAIHTIAGLVKDSTICSLARANDKDIQRAADALKPANSARIHTFIATSPLHMEKKLRMTPDQVFEQARLAVRFARKFTDNVEFSPEDGSRSDLDFLCRVLEAVIAEGATTINIADTVGYGVPELYGNLVKTLRERIPNSDKAIFSVHCHNDLGMAVANSLAGVKIGGARQVECTINGLGERAGNTSLEEIVMAVKTRKDYFGLDVGLDTTQIVPTSKLVSQITGFVVQPNKAVVGANAFAHASGIHQDGVLKARDTYEIMRAEDVGWTANKIVLGKLSGRNAFKQRLQELGVSLDSETELNAAFMRFKDLADRKSEIFDEDIIAIVSEESALAQEQEHYKFVSLSQRSETGEQPQAKVVFALDGKEVTGEARGNGPVDATFNAIEGEVGSGSELLLYSVNAITTGTQAQGEVTVRLSKSGRIVNGVGTDPDIVAASAKAYIAALNKLHSKDDKLNPQRS.

In terms of domain architecture, Pyruvate carboxyltransferase spans Leu5–Val268. 4 residues coordinate Mn(2+): Asp14, His202, His204, and Asn239. Positions Lys395–Ser514 are regulatory domain.

This sequence belongs to the alpha-IPM synthase/homocitrate synthase family. LeuA type 1 subfamily. As to quaternary structure, homodimer. Requires Mn(2+) as cofactor.

The protein localises to the cytoplasm. It catalyses the reaction 3-methyl-2-oxobutanoate + acetyl-CoA + H2O = (2S)-2-isopropylmalate + CoA + H(+). The protein operates within amino-acid biosynthesis; L-leucine biosynthesis; L-leucine from 3-methyl-2-oxobutanoate: step 1/4. Functionally, catalyzes the condensation of the acetyl group of acetyl-CoA with 3-methyl-2-oxobutanoate (2-ketoisovalerate) to form 3-carboxy-3-hydroxy-4-methylpentanoate (2-isopropylmalate). This chain is 2-isopropylmalate synthase, found in Burkholderia ambifaria (strain MC40-6).